We begin with the raw amino-acid sequence, 68 residues long: Protease A inhibitor 3 (68 aa).

Met-1 is subject to N-acetylmethionine. Residues 1-14 (MNTDQQKVSEIFQS) are compositionally biased toward polar residues. Disordered stretches follow at residues 1–21 (MNTDQQKVSEIFQSSKEKLQG) and 33–68 (MASQDKDGKTTDADESEKHNYQEQYNKLKGAGHKKE). The inhibitory domain stretch occupies residues 1 to 32 (MNTDQQKVSEIFQSSKEKLQGDAKVVSDAFKK). Basic and acidic residues predominate over residues 33–53 (MASQDKDGKTTDADESEKHNY).

The protein belongs to the protease inhibitor I34 family.

Functionally, specific and potent inhibitor for yeast aspartic protease A (yscA). The proteinase acts as a folding template stabilizing the helical conformation in the inhibitor, which results in the potent and specific blockage of the proteolytic activity. This is Protease A inhibitor 3 (PAI3) from Saccharomyces cerevisiae (strain ATCC 204508 / S288c) (Baker's yeast).